We begin with the raw amino-acid sequence, 301 residues long: Acetaldehyde dehydrogenase (301 aa).

Residue C130 is the Acyl-thioester intermediate of the active site. Residues S161–N169 and N272 contribute to the NAD(+) site.

The protein belongs to the acetaldehyde dehydrogenase family.

The enzyme catalyses acetaldehyde + NAD(+) + CoA = acetyl-CoA + NADH + H(+). This Cupriavidus taiwanensis (strain DSM 17343 / BCRC 17206 / CCUG 44338 / CIP 107171 / LMG 19424 / R1) (Ralstonia taiwanensis (strain LMG 19424)) protein is Acetaldehyde dehydrogenase (mhpF).